The following is a 221-amino-acid chain: Long-tail fiber protein gp36 (221 aa).

This sequence belongs to the tevenvirinae tail fiber protein p36 family. The long-tail fibers are trimeric, with a stoichiometry of gp34/gp37/gp36/gp35 of 3:3:3:1.

The protein localises to the virion. Structural component of the distal-half of the long-tail fiber. The long-tail fiber of T4 is about 1600 Angstroms long with a kink in the middle that divides the fiber into proximal and distal halves. The thin tip of the distal half-fiber interacts with the bacterial lipopolysaccharide receptor and specifies the host range of the phage. The sequence is that of Long-tail fiber protein gp36 (36) from Escherichia coli (Bacteriophage T4).